The primary structure comprises 180 residues: Large ribosomal subunit protein uL5 (180 aa).

The protein belongs to the universal ribosomal protein uL5 family. In terms of assembly, part of the 50S ribosomal subunit; part of the 5S rRNA/L5/L18/L25 subcomplex. Contacts the 5S rRNA and the P site tRNA. Forms a bridge to the 30S subunit in the 70S ribosome.

Its function is as follows. This is one of the proteins that bind and probably mediate the attachment of the 5S RNA into the large ribosomal subunit, where it forms part of the central protuberance. In the 70S ribosome it contacts protein S13 of the 30S subunit (bridge B1b), connecting the 2 subunits; this bridge is implicated in subunit movement. Contacts the P site tRNA; the 5S rRNA and some of its associated proteins might help stabilize positioning of ribosome-bound tRNAs. The sequence is that of Large ribosomal subunit protein uL5 from Moorella thermoacetica (strain ATCC 39073 / JCM 9320).